The chain runs to 400 residues: MSDKNRVALAFSGGLDTTVCVPLLEEEYGYDEVIGVTVDVGQPEAEFKEAEETAEALDLEHHVVDAKPEFAELCFDAVRANASYQGYPLGTALARPVIAEAILEVAKEEGCSGVAHGSTGKGNDQLRFEAVWRDSDLEVIAPVRELGLTRTFEQEYAEERGLPIEGGDEGKYSIDTNLWSRSIEGSELEEPGYVPPEDIYEWTTAPTAETLEVEVGFEDGYPVSLDGEKLEPVELIETLNDLAGDYGVGRTDIMEDRMLGLKVRENYEHPAATVLLNAHQALEDLVLTKEERAFKKQVDHEWSEKGYQGLVNAPLVDALEGFIDETQDRVTGTVTIRFEGGQARPVGRESPYAVYSAEAASFNTEDVTGGIEQSDATGVAKYHGFQERLANRVIDAADEE.

An ATP-binding site is contributed by alanine 10–threonine 18. Residue tyrosine 87 coordinates L-citrulline. Residue glycine 117 coordinates ATP. Residues threonine 119, asparagine 123, and aspartate 124 each coordinate L-aspartate. Asparagine 123 contributes to the L-citrulline binding site. 5 residues coordinate L-citrulline: arginine 127, serine 173, serine 182, glutamate 255, and tyrosine 267.

Belongs to the argininosuccinate synthase family. Type 1 subfamily. In terms of assembly, homotetramer.

The protein resides in the cytoplasm. The enzyme catalyses L-citrulline + L-aspartate + ATP = 2-(N(omega)-L-arginino)succinate + AMP + diphosphate + H(+). The protein operates within amino-acid biosynthesis; L-arginine biosynthesis; L-arginine from L-ornithine and carbamoyl phosphate: step 2/3. The protein is Argininosuccinate synthase of Natronomonas pharaonis (strain ATCC 35678 / DSM 2160 / CIP 103997 / JCM 8858 / NBRC 14720 / NCIMB 2260 / Gabara) (Halobacterium pharaonis).